The chain runs to 298 residues: 3'-5' exonuclease crn-4 (298 aa).

In terms of domain architecture, Exonuclease spans leucine 12–leucine 192. Residues aspartate 15, glutamate 17, and aspartate 184 each coordinate Mg(2+). Zn(2+) is bound by residues cysteine 210, cysteine 260, cysteine 263, and cysteine 270.

As to quaternary structure, homodimer (via C-terminus). Interacts with crn-5; interaction promotes the DNase activity of crn-4. Interacts with cps-6, crn-1 and cyn-13. Requires Mg(2+) as cofactor.

With respect to regulation, exonuclease activity is inhibited in vitro by pontacyl violet 6R (PV6R), p-chloromercuriphenyl sulfonate (PCMPS), 5,5'-dithiobis(2-nitrobenzoic acid) (DTNB), aurintricarboxylic acid (ATA), 2-morpholin-4-ylethanesulfonate (MES), 4-[(4,6-dichloro-1,3,5-triazin-2-yl)amino]-2-(3-hydroxy-6-oxoxanthen-9-yl)benzoic acid (DR396) and fmoc-d-Cha-OH (FDCO). Interaction with ssRNA is reduced in vitro by PV6R. In terms of biological role, possesses 3'-&gt;5' exoribonuclease activity in digestion of DNA and RNA. Cleaves nucleic acid substrates with efficiencies in the following order: single-stranded RNA (ssRNA) &gt; double-stranded DNA (dsDNA) &gt; single-stranded DNA (ssDNA). Involved in apoptotic DNA degradation. This chain is 3'-5' exonuclease crn-4 (crn-4), found in Caenorhabditis elegans.